The chain runs to 448 residues: tRNA(Ile)-lysidine synthase (448 aa).

27–32 (SGGVDS) provides a ligand contact to ATP.

Belongs to the tRNA(Ile)-lysidine synthase family.

The protein localises to the cytoplasm. The catalysed reaction is cytidine(34) in tRNA(Ile2) + L-lysine + ATP = lysidine(34) in tRNA(Ile2) + AMP + diphosphate + H(+). Functionally, ligates lysine onto the cytidine present at position 34 of the AUA codon-specific tRNA(Ile) that contains the anticodon CAU, in an ATP-dependent manner. Cytidine is converted to lysidine, thus changing the amino acid specificity of the tRNA from methionine to isoleucine. The protein is tRNA(Ile)-lysidine synthase of Vibrio campbellii (strain ATCC BAA-1116).